A 380-amino-acid chain; its full sequence is D-alanine--D-alanine ligase (380 aa).

Positions 142–348 constitute an ATP-grasp domain; it reads KQVLTAHGIR…YADLIDRLIE (207 aa). 172–227 is a binding site for ATP; the sequence is QSRLGDNVFIKPANQGSSVGIHKASNVQEYLDGVADAFRYDYKVLVEQTIDGPQEV. Residues aspartate 302, glutamate 315, and asparagine 317 each contribute to the Mg(2+) site.

The protein belongs to the D-alanine--D-alanine ligase family. Requires Mg(2+) as cofactor. The cofactor is Mn(2+).

It is found in the cytoplasm. It catalyses the reaction 2 D-alanine + ATP = D-alanyl-D-alanine + ADP + phosphate + H(+). It participates in cell wall biogenesis; peptidoglycan biosynthesis. Functionally, cell wall formation. The polypeptide is D-alanine--D-alanine ligase (Levilactobacillus brevis (strain ATCC 367 / BCRC 12310 / CIP 105137 / JCM 1170 / LMG 11437 / NCIMB 947 / NCTC 947) (Lactobacillus brevis)).